The chain runs to 350 residues: Tsukushi (350 aa).

The first 17 residues, 1–17, serve as a signal peptide directing secretion; the sequence is MAPSWLFLLFIPGMVGS. One can recognise an LRRNT domain in the interval 18-59; sequence SRSCFPGCQCIVDNFGLFHSFSLTKVDCSGVGPHVVPVSIPL. LRR repeat units follow at residues 60 to 81, 86 to 107, 110 to 131, 133 to 154, 159 to 180, 183 to 203, 204 to 225, 228 to 250, 253 to 275, and 278 to 299; these read DTSYLDLSANGIKRINESVLSG, TLINLNLSHNQIVRISFSTFSK, YLESLDLSHNLLETLPDGSFLY, RLTELDLSSNKLLEVGIGAFTL, RSMTINLGNNNIRSIHRGAERP, NIHSLTLSGNDLLSVPDLHGI, PLRHLDLDRNPLAKIEKESFLG, GLTHLSLSDLPNLREVSPYSFKT, SLLDLDLSSNPQLKSLSSDMFFG, and SLQELNLAYSGVAALPKDIMLN. 2 N-linked (GlcNAc...) asparagine glycosylation sites follow: Asn75 and Asn91.

Interacts with bmp4. Interacts with dll1 (via extracellular region). Interacts with fgf8; inhibits fgf8 signaling. Interacts with nodal2/Xnr2; enhances nodal2 activity.

Its subcellular location is the secreted. Contributes to various developmental events through its interactions with multiple signaling pathways. Dorsalizing factor which functions as an inhibitor of bone morphogenetic proteins (BMP) during gastrulation. Promotes dll1-dependent activation of Notch signaling and is required for neural crest formation. Induces endoderm and dorsal mesoderm formation by enhancing nodal2/Xnr2 activity while inhibiting ventrolateral mesoderm formation through inhibition of fgf8. In Xenopus tropicalis (Western clawed frog), this protein is Tsukushi (tsku).